Reading from the N-terminus, the 464-residue chain is tRNA modification GTPase MnmE (464 aa).

(6S)-5-formyl-5,6,7,8-tetrahydrofolate-binding residues include Arg27, Glu89, and Arg128. The TrmE-type G domain occupies 225 to 384 (GLATAIVGRP…LEETIAHLFF (160 aa)). Asn235 is a binding site for K(+). Residues 235-240 (NVGKSS), 254-260 (TDVAGTT), and 279-282 (DTAG) contribute to the GTP site. Residue Ser239 coordinates Mg(2+). K(+) is bound by residues Thr254, Val256, and Thr259. Thr260 serves as a coordination point for Mg(2+). Lys464 contacts (6S)-5-formyl-5,6,7,8-tetrahydrofolate.

This sequence belongs to the TRAFAC class TrmE-Era-EngA-EngB-Septin-like GTPase superfamily. TrmE GTPase family. As to quaternary structure, homodimer. Heterotetramer of two MnmE and two MnmG subunits. Requires K(+) as cofactor.

The protein localises to the cytoplasm. In terms of biological role, exhibits a very high intrinsic GTPase hydrolysis rate. Involved in the addition of a carboxymethylaminomethyl (cmnm) group at the wobble position (U34) of certain tRNAs, forming tRNA-cmnm(5)s(2)U34. This Levilactobacillus brevis (strain ATCC 367 / BCRC 12310 / CIP 105137 / JCM 1170 / LMG 11437 / NCIMB 947 / NCTC 947) (Lactobacillus brevis) protein is tRNA modification GTPase MnmE.